We begin with the raw amino-acid sequence, 339 residues long: Ribosomal RNA large subunit methyltransferase F (339 aa).

A disordered region spans residues 1-26 (MTAPSTPKPQRKKPKTATTAKPVVPR).

Belongs to the methyltransferase superfamily. METTL16/RlmF family.

It localises to the cytoplasm. It carries out the reaction adenosine(1618) in 23S rRNA + S-adenosyl-L-methionine = N(6)-methyladenosine(1618) in 23S rRNA + S-adenosyl-L-homocysteine + H(+). Functionally, specifically methylates the adenine in position 1618 of 23S rRNA. The sequence is that of Ribosomal RNA large subunit methyltransferase F from Pseudomonas fluorescens (strain SBW25).